The primary structure comprises 238 residues: Green fluorescent protein (238 aa).

The segment at residues 65–67 (SYG) is a cross-link (5-imidazolinone (Ser-Gly)). The residue at position 66 (Y66) is a (Z)-2,3-didehydrotyrosine.

It belongs to the GFP family. As to quaternary structure, monomer. Post-translationally, contains a chromophore consisting of modified amino acid residues. The chromophore is formed by autocatalytic backbone condensation between Ser-65 and Gly-67, and oxidation of Tyr-66 to didehydrotyrosine. Maturation of the chromophore requires nothing other than molecular oxygen. As to expression, photocytes.

Functionally, energy-transfer acceptor. Its role is to transduce the blue chemiluminescence of the protein aequorin into green fluorescent light by energy transfer. Fluoresces in vivo upon receiving energy from the Ca(2+)-activated photoprotein aequorin. This chain is Green fluorescent protein (GFP), found in Aequorea victoria (Water jellyfish).